Here is a 467-residue protein sequence, read N- to C-terminus: 3-isopropylmalate dehydratase large subunit (467 aa).

Residues Cys347, Cys408, and Cys411 each coordinate [4Fe-4S] cluster.

It belongs to the aconitase/IPM isomerase family. LeuC type 1 subfamily. Heterodimer of LeuC and LeuD. Requires [4Fe-4S] cluster as cofactor.

The catalysed reaction is (2R,3S)-3-isopropylmalate = (2S)-2-isopropylmalate. It functions in the pathway amino-acid biosynthesis; L-leucine biosynthesis; L-leucine from 3-methyl-2-oxobutanoate: step 2/4. Catalyzes the isomerization between 2-isopropylmalate and 3-isopropylmalate, via the formation of 2-isopropylmaleate. The chain is 3-isopropylmalate dehydratase large subunit from Bordetella bronchiseptica (strain ATCC BAA-588 / NCTC 13252 / RB50) (Alcaligenes bronchisepticus).